Here is a 425-residue protein sequence, read N- to C-terminus: MHKTERGDAMTALQQQDPEIFSLIQQEEVRQHNKIRLIASENYVSSAVLEATGSILTNKYSEGYPGKRYYEGQQLIDQIESIAIDRAKAVFGAEHVNVQPYSGSPANMAVYLAFLKPGDTILGMALPHGGHLTHGSKVSISGKYFNAVSYALNEEGILDYEEIRNKALECKPKILIAGHSAYPRILDFAKFREIADEVGALLMVDMAHFAGLVAGGVHPSPFPYADVVTTTTHKSLRGPRGAMIMCKAEYAKAIDKAVFPGMQGGPHDSTTAAIAVALKEASTDSFKKYTAQVVENAASLADVLIEKGFNLVTGGTENHLMLIDLSNKNITGKQAAKALDAAGIVLNCNSVPFDKRKPFDPSGIRLGTCAITSRGFAKAEMVILGNMMDRVVNNFEDSAVLAEIAQEVQALCDKFPAPGLEHIAK.

(6S)-5,6,7,8-tetrahydrofolate contacts are provided by residues Leu-126 and 130 to 132 (GHL). Lys-234 carries the post-translational modification N6-(pyridoxal phosphate)lysine.

It belongs to the SHMT family. In terms of assembly, homodimer. It depends on pyridoxal 5'-phosphate as a cofactor.

It is found in the cytoplasm. It catalyses the reaction (6R)-5,10-methylene-5,6,7,8-tetrahydrofolate + glycine + H2O = (6S)-5,6,7,8-tetrahydrofolate + L-serine. It functions in the pathway one-carbon metabolism; tetrahydrofolate interconversion. It participates in amino-acid biosynthesis; glycine biosynthesis; glycine from L-serine: step 1/1. Its function is as follows. Catalyzes the reversible interconversion of serine and glycine with tetrahydrofolate (THF) serving as the one-carbon carrier. This reaction serves as the major source of one-carbon groups required for the biosynthesis of purines, thymidylate, methionine, and other important biomolecules. Also exhibits THF-independent aldolase activity toward beta-hydroxyamino acids, producing glycine and aldehydes, via a retro-aldol mechanism. This Desulfotalea psychrophila (strain LSv54 / DSM 12343) protein is Serine hydroxymethyltransferase.